The primary structure comprises 184 residues: Large ribosomal subunit protein uL6 (184 aa).

Belongs to the universal ribosomal protein uL6 family. As to quaternary structure, part of the 50S ribosomal subunit.

This protein binds to the 23S rRNA, and is important in its secondary structure. It is located near the subunit interface in the base of the L7/L12 stalk, and near the tRNA binding site of the peptidyltransferase center. This is Large ribosomal subunit protein uL6 from Desulfurococcus amylolyticus (strain DSM 18924 / JCM 16383 / VKM B-2413 / 1221n) (Desulfurococcus kamchatkensis).